A 231-amino-acid polypeptide reads, in one-letter code: Flagellar L-ring protein (231 aa).

Positions 1–20 are cleaved as a signal peptide; that stretch reads MTYRRIPLYLSCLFLLALSG. Residue cysteine 21 is the site of N-palmitoyl cysteine attachment. The S-diacylglycerol cysteine moiety is linked to residue cysteine 21.

This sequence belongs to the FlgH family. In terms of assembly, the basal body constitutes a major portion of the flagellar organelle and consists of four rings (L,P,S, and M) mounted on a central rod.

It is found in the cell outer membrane. The protein resides in the bacterial flagellum basal body. In terms of biological role, assembles around the rod to form the L-ring and probably protects the motor/basal body from shearing forces during rotation. This is Flagellar L-ring protein from Desulfotalea psychrophila (strain LSv54 / DSM 12343).